The sequence spans 379 residues: Armadillo repeat-containing X-linked protein 3 (379 aa).

Topologically, residues 1–6 (MGYARK) are mitochondrial intermembrane. 2 mitochondrion outer membrane (MOM)-targeting sequence regions span residues 1 to 6 (MGYARK) and 26 to 37 (RLTRGRKQNKEK). A helical; Signal-anchor membrane pass occupies residues 7-29 (VGWVTAGLVIGAGACYCIYRLTR). Topologically, residues 30–379 (GRKQNKEKMA…AEHMFPKSQE (350 aa)) are cytoplasmic. 3 positions are modified to phosphoserine: Ser61, Ser67, and Ser72. Positions 89 to 98 (RARARARARA) are nuclear localization signal. The residue at position 110 (Ser110) is a Phosphoserine. ARM repeat units lie at residues 111–151 (PNSD…NNAA), 153–192 (AFNRDIIRDLGGLPIVAKILNTRDPIVKEKALIVLNNLSV), and 233–272 (VTNEYQHMLANSISDFFRLFSAGNEETKLQVLKLLLNLAE).

The protein belongs to the eutherian X-chromosome-specific Armcx family. In terms of assembly, interacts (via ARM domain) with MIRO1, MIRO2 and TRAK2. The interaction with Miro is calcium-dependent. Interacts with SOX10.

Its subcellular location is the mitochondrion outer membrane. It is found in the cytoplasm. The protein localises to the nucleus. Its function is as follows. Regulates mitochondrial aggregation and transport in axons in living neurons. May link mitochondria to the TRAK2-kinesin motor complex via its interaction with Miro and TRAK2. Mitochondrial distribution and dynamics is regulated through ARMCX3 protein degradation, which is promoted by PCK and negatively regulated by WNT1. Enhances the SOX10-mediated transactivation of the neuronal acetylcholine receptor subunit alpha-3 and beta-4 subunit gene promoters. The polypeptide is Armadillo repeat-containing X-linked protein 3 (ARMCX3) (Pongo abelii (Sumatran orangutan)).